A 413-amino-acid polypeptide reads, in one-letter code: MSDFIFTSESVTEGHPDKICDQISDAVLDALLSEDPESRVACETVVNTGLCLLTGEITSRAKLDYIKLVRKVIKEIGYEGSKAGGFDSNSCAVLVALDEQSPDISQGVNEADDINEDLENNTGAGDQGIMFGYACDETPELMPLPISLAHRLAIQLAKVRHEKVLDYLLPDGKTQVSIDYKKGVPVSINTILISTQHTAEIDGITNEEEIRQKIKEDLWINVVLPATEDLEIKPSNQKTRFLVNPTGKFVVGGPQGDAGLTGRKIIVDTYGGYARHGGGAFSGKDPTKVDRSAAYAARYVAKSIVKAKLAKKAEVQLSYAIGVAKPISILVETFGTGIISQDNLKELIKNNFDLRPAAIIKEFDLRNLPKKMGGEFFRKTASYGHFGRNDLNLPWERVEEKSAQLVEASKILL.

Histidine 15 is a binding site for ATP. Position 17 (aspartate 17) interacts with Mg(2+). Glutamate 43 contacts K(+). Residues glutamate 56 and glutamine 100 each coordinate L-methionine. The tract at residues glutamine 100–glutamate 110 is flexible loop. ATP is bound by residues aspartate 171 to lysine 173, lysine 248 to phenylalanine 249, aspartate 257, arginine 263 to lysine 264, alanine 280, and lysine 284. Aspartate 257 serves as a coordination point for L-methionine. Lysine 288 provides a ligand contact to L-methionine.

This sequence belongs to the AdoMet synthase family. As to quaternary structure, homotetramer; dimer of dimers. The cofactor is Mg(2+). Requires K(+) as cofactor.

Its subcellular location is the cytoplasm. It catalyses the reaction L-methionine + ATP + H2O = S-adenosyl-L-methionine + phosphate + diphosphate. The protein operates within amino-acid biosynthesis; S-adenosyl-L-methionine biosynthesis; S-adenosyl-L-methionine from L-methionine: step 1/1. Catalyzes the formation of S-adenosylmethionine (AdoMet) from methionine and ATP. The overall synthetic reaction is composed of two sequential steps, AdoMet formation and the subsequent tripolyphosphate hydrolysis which occurs prior to release of AdoMet from the enzyme. The protein is S-adenosylmethionine synthase of Prochlorococcus marinus subsp. pastoris (strain CCMP1986 / NIES-2087 / MED4).